The chain runs to 295 residues: 5,10-methylenetetrahydrofolate reductase (295 aa).

Catalysis depends on E28, which acts as the Proton donor/acceptor. T59 contributes to the NADH binding site. Positions 89, 119, 120, 121, 133, 153, 157, 160, 166, 169, 172, and 173 each coordinate FAD. D121 lines the (6S)-5-methyl-5,6,7,8-tetrahydrofolate pocket. Q184 contacts NADH. (6S)-5-methyl-5,6,7,8-tetrahydrofolate-binding residues include Q184, Q220, and K280.

This sequence belongs to the methylenetetrahydrofolate reductase family. Requires FAD as cofactor.

It carries out the reaction (6S)-5-methyl-5,6,7,8-tetrahydrofolate + NAD(+) = (6R)-5,10-methylene-5,6,7,8-tetrahydrofolate + NADH + H(+). It participates in one-carbon metabolism; tetrahydrofolate interconversion. The protein operates within amino-acid biosynthesis; L-methionine biosynthesis via de novo pathway. Catalyzes the NADH-dependent reduction of 5,10-methylenetetrahydrofolate to 5-methyltetrahydrofolate. Is required to provide the methyl group necessary for methionine synthetase to convert homocysteine to methionine; the methyl group is given by 5-methyltetrahydrofolate. In Buchnera aphidicola subsp. Baizongia pistaciae (strain Bp), this protein is 5,10-methylenetetrahydrofolate reductase (metF).